The following is a 219-amino-acid chain: Small ribosomal subunit protein uS3c (219 aa).

Residues 43–118 (IKNYVQNNMI…KLNITITRIE (76 aa)) form the KH type-2 domain.

The protein belongs to the universal ribosomal protein uS3 family. In terms of assembly, part of the 30S ribosomal subunit.

It localises to the plastid. The polypeptide is Small ribosomal subunit protein uS3c (rps3) (Cuscuta exaltata (Tall dodder)).